The sequence spans 143 residues: Hemoglobin subunit alpha-1 (143 aa).

Position 2 is an N-acetylserine (Ser-2). A Globin domain is found at Ser-2–Arg-143. His-60 lines the O2 pocket. His-89 contributes to the heme b binding site.

Belongs to the globin family. In terms of assembly, hb1 is a heterotetramer of two alpha-1 chains and two beta-1 chains. Red blood cells.

Its function is as follows. Involved in oxygen transport from gills to the various peripheral tissues. The protein is Hemoglobin subunit alpha-1 (hba1) of Anarhichas minor (Arctic spotted wolffish).